We begin with the raw amino-acid sequence, 245 residues long: tRNA1(Val) (adenine(37)-N6)-methyltransferase (245 aa).

Belongs to the methyltransferase superfamily. tRNA (adenine-N(6)-)-methyltransferase family.

The protein resides in the cytoplasm. It catalyses the reaction adenosine(37) in tRNA1(Val) + S-adenosyl-L-methionine = N(6)-methyladenosine(37) in tRNA1(Val) + S-adenosyl-L-homocysteine + H(+). In terms of biological role, specifically methylates the adenine in position 37 of tRNA(1)(Val) (anticodon cmo5UAC). The chain is tRNA1(Val) (adenine(37)-N6)-methyltransferase from Salmonella arizonae (strain ATCC BAA-731 / CDC346-86 / RSK2980).